The sequence spans 300 residues: Protein sprouty homolog 4 (300 aa).

Met-1 carries the post-translational modification N-acetylmethionine. Disordered stretches follow at residues 1-28 and 52-114; these read MEPPVPQSSVPVNPSSVMVQPLLDSRAP and DYID…RLLD. 2 stretches are compositionally biased toward low complexity: residues 7–21 and 92–108; these read QSSVPVNPSSVMVQP and SFSGRPSSVSSSSSTSS. Ser-126 is modified (phosphoserine). The region spanning 167–274 is the SPR domain; the sequence is KCKECASPRT…GYDRLRRPGC (108 aa).

It belongs to the sprouty family. As to quaternary structure, interacts (via C-terminus) with TESK1 (via both C- and N-termini); the interaction inhibits TESK1 kinase activity. Interacts with RAF1. Interacts with CAV1 (via C-terminus). In terms of tissue distribution, expressed in the embryo and adult tissues including heart, brain, lung, kidney, and skeletal muscle.

It localises to the cytoplasm. It is found in the cell projection. Its subcellular location is the ruffle membrane. In terms of biological role, suppresses the insulin receptor and EGFR-transduced MAPK signaling pathway, but does not inhibit MAPK activation by a constitutively active mutant Ras. Probably impairs the formation of GTP-Ras. Inhibits Ras-independent, but not Ras-dependent, activation of RAF1. Represses integrin-mediated cell spreading via inhibition of TESK1-mediated phosphorylation of cofilin. The chain is Protein sprouty homolog 4 (Spry4) from Mus musculus (Mouse).